Consider the following 227-residue polypeptide: Phosphoribosylformylglycinamidine synthase subunit PurQ (227 aa).

The 223-residue stretch at 3-225 folds into the Glutamine amidotransferase type-1 domain; sequence FAVIVLPGSN…VKNWRETHVA (223 aa). Cys-86 serves as the catalytic Nucleophile. Residues His-194 and Glu-196 contribute to the active site.

Part of the FGAM synthase complex composed of 1 PurL, 1 PurQ and 2 PurS subunits.

Its subcellular location is the cytoplasm. It catalyses the reaction N(2)-formyl-N(1)-(5-phospho-beta-D-ribosyl)glycinamide + L-glutamine + ATP + H2O = 2-formamido-N(1)-(5-O-phospho-beta-D-ribosyl)acetamidine + L-glutamate + ADP + phosphate + H(+). It carries out the reaction L-glutamine + H2O = L-glutamate + NH4(+). It functions in the pathway purine metabolism; IMP biosynthesis via de novo pathway; 5-amino-1-(5-phospho-D-ribosyl)imidazole from N(2)-formyl-N(1)-(5-phospho-D-ribosyl)glycinamide: step 1/2. Part of the phosphoribosylformylglycinamidine synthase complex involved in the purines biosynthetic pathway. Catalyzes the ATP-dependent conversion of formylglycinamide ribonucleotide (FGAR) and glutamine to yield formylglycinamidine ribonucleotide (FGAM) and glutamate. The FGAM synthase complex is composed of three subunits. PurQ produces an ammonia molecule by converting glutamine to glutamate. PurL transfers the ammonia molecule to FGAR to form FGAM in an ATP-dependent manner. PurS interacts with PurQ and PurL and is thought to assist in the transfer of the ammonia molecule from PurQ to PurL. The sequence is that of Phosphoribosylformylglycinamidine synthase subunit PurQ from Bacillus licheniformis (strain ATCC 14580 / DSM 13 / JCM 2505 / CCUG 7422 / NBRC 12200 / NCIMB 9375 / NCTC 10341 / NRRL NRS-1264 / Gibson 46).